Here is a 456-residue protein sequence, read N- to C-terminus: Bifunctional protein GlmU (456 aa).

The interval Met-1–Arg-229 is pyrophosphorylase. Residues Leu-11 to Gly-14, Lys-25, Gln-76, Gly-81 to Thr-82, Tyr-103 to Asp-105, Gly-140, Glu-154, Asn-169, and Asn-227 contribute to the UDP-N-acetyl-alpha-D-glucosamine site. Asp-105 lines the Mg(2+) pocket. Asn-227 contacts Mg(2+). Residues Leu-230–Ala-250 form a linker region. The N-acetyltransferase stretch occupies residues Gly-251–Lys-456. UDP-N-acetyl-alpha-D-glucosamine-binding residues include Arg-333 and Lys-351. The Proton acceptor role is filled by His-363. UDP-N-acetyl-alpha-D-glucosamine contacts are provided by Tyr-366 and Asn-377. Acetyl-CoA is bound by residues Ala-380, Asn-386–Tyr-387, Ser-405, Ala-423, and Arg-440.

The protein in the N-terminal section; belongs to the N-acetylglucosamine-1-phosphate uridyltransferase family. It in the C-terminal section; belongs to the transferase hexapeptide repeat family. Homotrimer. Mg(2+) serves as cofactor.

It localises to the cytoplasm. It carries out the reaction alpha-D-glucosamine 1-phosphate + acetyl-CoA = N-acetyl-alpha-D-glucosamine 1-phosphate + CoA + H(+). It catalyses the reaction N-acetyl-alpha-D-glucosamine 1-phosphate + UTP + H(+) = UDP-N-acetyl-alpha-D-glucosamine + diphosphate. The protein operates within nucleotide-sugar biosynthesis; UDP-N-acetyl-alpha-D-glucosamine biosynthesis; N-acetyl-alpha-D-glucosamine 1-phosphate from alpha-D-glucosamine 6-phosphate (route II): step 2/2. It functions in the pathway nucleotide-sugar biosynthesis; UDP-N-acetyl-alpha-D-glucosamine biosynthesis; UDP-N-acetyl-alpha-D-glucosamine from N-acetyl-alpha-D-glucosamine 1-phosphate: step 1/1. Its pathway is bacterial outer membrane biogenesis; LPS lipid A biosynthesis. Its function is as follows. Catalyzes the last two sequential reactions in the de novo biosynthetic pathway for UDP-N-acetylglucosamine (UDP-GlcNAc). The C-terminal domain catalyzes the transfer of acetyl group from acetyl coenzyme A to glucosamine-1-phosphate (GlcN-1-P) to produce N-acetylglucosamine-1-phosphate (GlcNAc-1-P), which is converted into UDP-GlcNAc by the transfer of uridine 5-monophosphate (from uridine 5-triphosphate), a reaction catalyzed by the N-terminal domain. This chain is Bifunctional protein GlmU, found in Edwardsiella ictaluri (strain 93-146).